The chain runs to 381 residues: Homoserine O-acetyltransferase (381 aa).

Positions 47–359 (NAILICHALT…DKGHDAFLLD (313 aa)) constitute an AB hydrolase-1 domain. Ser-153 (nucleophile) is an active-site residue. Position 223 (Arg-223) interacts with substrate. Active-site residues include Asp-320 and His-353. Asp-354 is a binding site for substrate.

This sequence belongs to the AB hydrolase superfamily. MetX family. Homodimer.

It is found in the cytoplasm. It catalyses the reaction L-homoserine + acetyl-CoA = O-acetyl-L-homoserine + CoA. The protein operates within amino-acid biosynthesis; L-methionine biosynthesis via de novo pathway; O-acetyl-L-homoserine from L-homoserine: step 1/1. In terms of biological role, transfers an acetyl group from acetyl-CoA to L-homoserine, forming acetyl-L-homoserine. This Acidiphilium cryptum (strain JF-5) protein is Homoserine O-acetyltransferase.